The primary structure comprises 366 residues: Ferredoxin--NADP reductase, leaf isozyme 2, chloroplastic (366 aa).

The N-terminal 48 residues, 1–48 (MAAVNTVSSLPCSKAGAAVAGGAPRPSTCSVFYPPRCWSKRSSGNGVR), are a transit peptide targeting the chloroplast. Residues 87–209 (KEPYTGRCLL…TGPVGKEMLM (123 aa)) enclose the FAD-binding FR-type domain. FAD-binding positions include 145 to 148 (RLYS), 166 to 168 (CVK), Tyr-172, and 183 to 185 (VCS). NADP(+) is bound by residues Ser-148 and Lys-168. A disulfide bridge links Cys-184 with Cys-189. Ser-185 carries the phosphoserine modification. The residue at position 216 (Thr-216) is a Phosphothreonine. Thr-224 is a binding site for FAD. NADP(+) contacts are provided by residues Thr-224, 256–257 (VP), 286–287 (SR), Lys-296, 325–326 (GL), and Glu-364.

Belongs to the ferredoxin--NADP reductase type 1 family. Heterodimer with LFNR1. Component of high molecular weight thylakoid LFNRs-containing protein complexes containing LIR1, LFNR1, LFNR2, TIC62 and TROL proteins. Interacts directly with LIR1 and TIC62; LIR1 increases the affinity of LFNR1 and LFNR2 for TIC62. It depends on FAD as a cofactor. Post-translationally, may form interchain disulfide bonds with LIR1.

The protein localises to the plastid. It localises to the chloroplast stroma. It is found in the chloroplast thylakoid membrane. It carries out the reaction 2 reduced [2Fe-2S]-[ferredoxin] + NADP(+) + H(+) = 2 oxidized [2Fe-2S]-[ferredoxin] + NADPH. Its pathway is energy metabolism; photosynthesis. Functionally, plays a key role in regulating the relative amounts of cyclic and non-cyclic electron flow to meet the demands of the plant for ATP and reducing power. This Oryza sativa subsp. japonica (Rice) protein is Ferredoxin--NADP reductase, leaf isozyme 2, chloroplastic.